The sequence spans 476 residues: MNFKSTIGLEVHFELKTKSKIFSPSPVTYGAEANTETNVIDWAMPGVLPRLNKDVYRLGIMVALATHSHILPVTHFDRKNYFYPDNPKAYQITQFFQPLARDGYIEVEVRGKKKRIGIHEMHIEEDAGKNTHGANGYSYVDLNRQGVPLLEVVSEPDMEDPEEAYAYLTKLRQIVQFTGASDVKMEEGSMRVDTNISIRPAGQEKLGTKVEMKNLNSFDHVRRSLAYEEKRQQQVLLSGGRVQLSTRRFDEATGKTVLERVKEGDADYRYFPEPDIAPYHIKQSWIDEIAESLPESPFERRKRYVKEYGIKEYDADVILQTKESSDFYDAAVAAGADPTLAANWLNTQVNGYLNENQVGIADIKLTPEHLAEMIKMIKDGTISSKIAKKVFKESIENGTDPKKYVEDKGMVQLSDVSVLGPMVTKVVDDNPQSVEDFKNGKDRAIGFLVGQIMKQTRGKANPKVVNQLLNKELQSR.

This sequence belongs to the GatB/GatE family. GatB subfamily. As to quaternary structure, heterotrimer of A, B and C subunits.

It carries out the reaction L-glutamyl-tRNA(Gln) + L-glutamine + ATP + H2O = L-glutaminyl-tRNA(Gln) + L-glutamate + ADP + phosphate + H(+). It catalyses the reaction L-aspartyl-tRNA(Asn) + L-glutamine + ATP + H2O = L-asparaginyl-tRNA(Asn) + L-glutamate + ADP + phosphate + 2 H(+). Allows the formation of correctly charged Asn-tRNA(Asn) or Gln-tRNA(Gln) through the transamidation of misacylated Asp-tRNA(Asn) or Glu-tRNA(Gln) in organisms which lack either or both of asparaginyl-tRNA or glutaminyl-tRNA synthetases. The reaction takes place in the presence of glutamine and ATP through an activated phospho-Asp-tRNA(Asn) or phospho-Glu-tRNA(Gln). In Lactobacillus gasseri (strain ATCC 33323 / DSM 20243 / BCRC 14619 / CIP 102991 / JCM 1131 / KCTC 3163 / NCIMB 11718 / NCTC 13722 / AM63), this protein is Aspartyl/glutamyl-tRNA(Asn/Gln) amidotransferase subunit B.